Reading from the N-terminus, the 466-residue chain is Cysteine--tRNA ligase (466 aa).

Cys29 lines the Zn(2+) pocket. The short motif at 31-41 (PTVYDFAHIGN) is the 'HIGH' region element. Zn(2+) is bound by residues Cys210, His235, and Glu239. The 'KMSKS' region signature appears at 267 to 271 (KMSKS). Lys270 contacts ATP.

Belongs to the class-I aminoacyl-tRNA synthetase family. Monomer. It depends on Zn(2+) as a cofactor.

The protein resides in the cytoplasm. It carries out the reaction tRNA(Cys) + L-cysteine + ATP = L-cysteinyl-tRNA(Cys) + AMP + diphosphate. This Solibacter usitatus (strain Ellin6076) protein is Cysteine--tRNA ligase.